The following is a 410-amino-acid chain: Protein king tubby 1 (410 aa).

Disordered regions lie at residues 44–109 and 121–159; these read QFMM…STRH and ISPA…EGDV. A compositionally biased stretch (polar residues) spans 47 to 72; the sequence is MSPNNPDQILTSTGNASVTTTPTSPY. The span at 132 to 143 shows a compositional bias: basic and acidic residues; the sequence is SHHDSSSGKSVE.

Belongs to the TUB family.

The protein resides in the cytoplasm. It is found in the nucleus. The sequence is that of Protein king tubby 1 (king-tubby1) from Aedes aegypti (Yellowfever mosquito).